A 1061-amino-acid chain; its full sequence is Transcription factor GTE10 (1061 aa).

Disordered regions lie at residues glutamate 32–valine 56 and asparagine 106–valine 152. Basic and acidic residues predominate over residues serine 109 to proline 118. The region spanning tyrosine 156 to isoleucine 262 is the Bromo domain. The NET domain occupies lysine 304–methionine 386. 4 disordered regions span residues alanine 443–leucine 518, valine 538–arginine 558, lysine 606–alanine 645, and histidine 710–lysine 1033. Residues glutamate 448–threonine 476 are compositionally biased toward low complexity. Residues aspartate 477–serine 506 show a composition bias toward basic and acidic residues. The stretch at proline 588–glycine 658 forms a coiled coil. 5 stretches are compositionally biased toward basic and acidic residues: residues arginine 733 to glycine 755, glutamate 770 to leucine 792, glutamate 828 to arginine 852, valine 860 to glutamine 883, and leucine 912 to glycine 929. A coiled-coil region spans residues arginine 852–serine 893. The span at leucine 940–glycine 949 shows a compositional bias: polar residues. Composition is skewed to basic and acidic residues over residues glutamate 952–glycine 962 and glycine 990–glutamate 1002.

As to quaternary structure, interacts with TIP/NAC091. In terms of tissue distribution, widely expressed in all tissues.

It localises to the nucleus. Its function is as follows. Acts as a negative regulator in plant response to changes in environmental conditions through the control of ABA-regulated gene expression. This is Transcription factor GTE10 (GTE10) from Arabidopsis thaliana (Mouse-ear cress).